The primary structure comprises 99 residues: Nucleoid-associated protein SEQ_0368 (99 aa).

This sequence belongs to the YbaB/EbfC family. Homodimer.

The protein resides in the cytoplasm. The protein localises to the nucleoid. Its function is as follows. Binds to DNA and alters its conformation. May be involved in regulation of gene expression, nucleoid organization and DNA protection. This is Nucleoid-associated protein SEQ_0368 from Streptococcus equi subsp. equi (strain 4047).